The primary structure comprises 747 residues: Endoglucanase D (747 aa).

An N-terminal signal peptide occupies residues 1–39 (MHSASRTRARTRVRTAVSGLLAATVLAAPLTLVAAPAQA). The active-site Proton donor is glutamate 208. The active-site Nucleophile is the glutamate 349. Residues 456-475 (APTGLRAGTPTASTVPLTWS) form a disordered region. Fibronectin type-III domains lie at 456 to 543 (APTG…TAAG) and 552 to 639 (VPTG…TAPD). A compositionally biased stretch (polar residues) spans 465–475 (PTASTVPLTWS). Residues 638-747 (PDPTTGSCAV…TVGGATCTTR (110 aa)) form the CBM2 domain.

It belongs to the glycosyl hydrolase 5 (cellulase A) family.

It catalyses the reaction Endohydrolysis of (1-&gt;4)-beta-D-glucosidic linkages in cellulose, lichenin and cereal beta-D-glucans.. The protein operates within glycan metabolism; cellulose degradation. The polypeptide is Endoglucanase D (cenD) (Cellulomonas fimi).